The chain runs to 604 residues: Protein hemingway (604 aa).

Disordered stretches follow at residues 1 to 70 (MSGA…GNPH), 103 to 309 (NQLS…PTSQ), 359 to 387 (SDRR…GGGI), and 544 to 585 (TIKA…IDLD). 4 stretches are compositionally biased toward acidic residues: residues 8 to 38 (SDEE…YIEP), 135 to 183 (EDEA…DDAQ), 194 to 214 (DDSD…EDEP), and 288 to 300 (EEPE…EENQ). A compositionally biased stretch (low complexity) spans 368-379 (EMSSMTETTMTS).

Belongs to the CFAP97 family. In terms of tissue distribution, detected in ciliated sensory neurons at all stages of development, and in adult testis.

It is found in the cell projection. The protein resides in the cilium. Its subcellular location is the perikaryon. It localises to the cytoplasm. Involved in assembly and/or maintenance of motile cilia. Required during spermatogenesis for axoneme elongation. Necessary for optimal function of the chordotonal (hearing) organs. The chain is Protein hemingway from Drosophila melanogaster (Fruit fly).